The primary structure comprises 218 residues: Phosphoribosylformylglycinamidine synthase subunit PurQ (218 aa).

The 217-residue stretch at 2-218 folds into the Glutamine amidotransferase type-1 domain; it reads SIAVLRFPGT…GARMLRGLAC (217 aa). Cys86 (nucleophile) is an active-site residue. Catalysis depends on residues His195 and Glu197.

Part of the FGAM synthase complex composed of 1 PurL, 1 PurQ and 2 PurS subunits.

It is found in the cytoplasm. It catalyses the reaction N(2)-formyl-N(1)-(5-phospho-beta-D-ribosyl)glycinamide + L-glutamine + ATP + H2O = 2-formamido-N(1)-(5-O-phospho-beta-D-ribosyl)acetamidine + L-glutamate + ADP + phosphate + H(+). The catalysed reaction is L-glutamine + H2O = L-glutamate + NH4(+). It participates in purine metabolism; IMP biosynthesis via de novo pathway; 5-amino-1-(5-phospho-D-ribosyl)imidazole from N(2)-formyl-N(1)-(5-phospho-D-ribosyl)glycinamide: step 1/2. In terms of biological role, part of the phosphoribosylformylglycinamidine synthase complex involved in the purines biosynthetic pathway. Catalyzes the ATP-dependent conversion of formylglycinamide ribonucleotide (FGAR) and glutamine to yield formylglycinamidine ribonucleotide (FGAM) and glutamate. The FGAM synthase complex is composed of three subunits. PurQ produces an ammonia molecule by converting glutamine to glutamate. PurL transfers the ammonia molecule to FGAR to form FGAM in an ATP-dependent manner. PurS interacts with PurQ and PurL and is thought to assist in the transfer of the ammonia molecule from PurQ to PurL. This is Phosphoribosylformylglycinamidine synthase subunit PurQ from Wolinella succinogenes (strain ATCC 29543 / DSM 1740 / CCUG 13145 / JCM 31913 / LMG 7466 / NCTC 11488 / FDC 602W) (Vibrio succinogenes).